The primary structure comprises 700 residues: Elongation factor G 2 (700 aa).

Positions 8–290 (ERYRNIGISA…AVLDFLPSPI (283 aa)) constitute a tr-type G domain. GTP-binding positions include 17–24 (AHIDAGKT), 88–92 (DTPGH), and 142–145 (NKMD).

This sequence belongs to the TRAFAC class translation factor GTPase superfamily. Classic translation factor GTPase family. EF-G/EF-2 subfamily.

The protein localises to the cytoplasm. Its function is as follows. Catalyzes the GTP-dependent ribosomal translocation step during translation elongation. During this step, the ribosome changes from the pre-translocational (PRE) to the post-translocational (POST) state as the newly formed A-site-bound peptidyl-tRNA and P-site-bound deacylated tRNA move to the P and E sites, respectively. Catalyzes the coordinated movement of the two tRNA molecules, the mRNA and conformational changes in the ribosome. This is Elongation factor G 2 from Paraburkholderia xenovorans (strain LB400).